The following is a 134-amino-acid chain: Profilin-4 (134 aa).

A disulfide bridge connects residues Cys-13 and Cys-118. The short motif at 84–100 (AVIRGKKGSGGITIKKT) is the Involved in PIP2 interaction element. Thr-114 carries the post-translational modification Phosphothreonine.

This sequence belongs to the profilin family. Occurs in many kinds of cells as a complex with monomeric actin in a 1:1 ratio. Phosphorylated by MAP kinases.

It localises to the cytoplasm. Its subcellular location is the cytoskeleton. Functionally, binds to actin and affects the structure of the cytoskeleton. At high concentrations, profilin prevents the polymerization of actin, whereas it enhances it at low concentrations. The chain is Profilin-4 from Olea europaea (Common olive).